We begin with the raw amino-acid sequence, 92 residues long: Small ribosomal subunit protein bS20 (92 aa).

Positions 1–21 (MPLHKSAEKRLRQAARRNERN) are enriched in basic and acidic residues. Disordered stretches follow at residues 1–26 (MPLHKSAEKRLRQAARRNERNRARKK) and 73–92 (ASRKKAQLTKALNNYTPTAS). Over residues 82–92 (KALNNYTPTAS) the composition is skewed to polar residues.

Belongs to the bacterial ribosomal protein bS20 family.

Its function is as follows. Binds directly to 16S ribosomal RNA. This Chlorobaculum tepidum (strain ATCC 49652 / DSM 12025 / NBRC 103806 / TLS) (Chlorobium tepidum) protein is Small ribosomal subunit protein bS20.